The primary structure comprises 142 residues: Hemoglobin subunit alpha-3 (142 aa).

Residues 2-142 enclose the Globin domain; it reads TLTDSDKAAV…VATVLTSKYR (141 aa). Residue H59 participates in O2 binding. A heme b-binding site is contributed by H88.

The protein belongs to the globin family. Heterotetramer of two alpha chains and two beta chains. Red blood cells.

Its function is as follows. This is a larval (tadpole) alpha-globin. The polypeptide is Hemoglobin subunit alpha-3 (hba3) (Xenopus laevis (African clawed frog)).